We begin with the raw amino-acid sequence, 270 residues long: Ethanolamine ammonia-lyase small subunit (270 aa).

Adenosylcob(III)alamin contacts are provided by Val-161, Glu-182, and Cys-211.

Belongs to the EutC family. In terms of assembly, the basic unit is a heterodimer which dimerizes to form tetramers. The heterotetramers trimerize; 6 large subunits form a core ring with 6 small subunits projecting outwards. The cofactor is adenosylcob(III)alamin.

Its subcellular location is the bacterial microcompartment. The catalysed reaction is ethanolamine = acetaldehyde + NH4(+). It participates in amine and polyamine degradation; ethanolamine degradation. Its function is as follows. Catalyzes the deamination of various vicinal amino-alcohols to oxo compounds. Allows this organism to utilize ethanolamine as the sole source of nitrogen and carbon in the presence of external vitamin B12. This is Ethanolamine ammonia-lyase small subunit from Azotobacter vinelandii (strain DJ / ATCC BAA-1303).